The sequence spans 307 residues: Dioxygenase swnH1 (307 aa).

The Fe cation site is built by histidine 149, aspartate 151, and histidine 227.

This sequence belongs to the PhyH family. As to quaternary structure, homodimer. It depends on Fe cation as a cofactor.

It functions in the pathway mycotoxin biosynthesis. Dioxygenase; part of the gene cluster that mediates the biosynthesis of swainsonine (SW), a cytotoxic fungal alkaloid and a potential cancer therapy drug. Swainsonine production occurs via a multibranched pathway and is dispensable for fungal colonization of plants and infection of insect hosts. The first step of swainsonine biosynthesis is the production of the precursor pipecolic acid (PA) via conversion of L-lysine (Lys) to 1-piperideine-6-carboxylate (P6C) by the aminotransferase swnA, the latter being further reduced to PA by the reductase swnR. The PKS-NRPS hybrid synthetase swnK uptakes and condensates PA and malonyl-CoA with and without skipping of the ketoreductase (KR) domain in order to produce 3 intermediates, 1-oxoindolizidine, (1S)-1-hydroxyindolizin, and (1R)-1-hydroxyindolizine; with the transisomer (1S)-1-hydroxyindolizin being predominant. The terminal thioester reductase (TE) domain of swnK is involved in reduction of the thioester bond to release the intermediate aldehydes. The oxidoreductase swnN could contribute to the reduction of 1-oxoindolizidine to (1S)-1-hydroxyindolizin and (1R)-1-hydroxyindolizine, contributing to the major route of SW production. The dioxygenase swnH2 would be responsible for the oxidization of (1R)-1-hydroxyindolizine into (1R,2S)-1,2-dihydroxyindolizine and of (1S)-1-hydroxyindolizin to yield both (1R,2S)-1,2-dihydroxyindolizine and (1S,2S)-1,2-dihydroxyindolizine. The dioxygenase swnH1 then performs the conversion of the 1,2-dihydroxyindolizine epimers to SW. The polypeptide is Dioxygenase swnH1 (Arthroderma benhamiae (strain ATCC MYA-4681 / CBS 112371) (Trichophyton mentagrophytes)).